A 295-amino-acid polypeptide reads, in one-letter code: Glutamate-binding protein GluB (295 aa).

The N-terminal stretch at 1 to 26 (MSAKRTFTRIGAILGATALAGVTLTA) is a signal peptide. Cys27 is lipidated: N-palmitoyl cysteine. Residue Cys27 is the site of S-diacylglycerol cysteine attachment.

It belongs to the bacterial solute-binding protein 3 family. As to quaternary structure, the complex is composed of two ATP-binding proteins (GluA), two transmembrane proteins (GluC and GluD) and a solute-binding protein (GluB).

Its subcellular location is the cell membrane. Binding of glutamate or asparatate induces a higher thermal stability of the protein structure. Functionally, part of the ABC transporter complex GluABCD involved in glutamate uptake. Binds glutamate with a high affinity. Also binds aspartate with high affinity, suggesting that GluB could be involved in the transport of both amino acid residues into the cell. This Corynebacterium glutamicum (strain ATCC 13032 / DSM 20300 / JCM 1318 / BCRC 11384 / CCUG 27702 / LMG 3730 / NBRC 12168 / NCIMB 10025 / NRRL B-2784 / 534) protein is Glutamate-binding protein GluB.